Consider the following 293-residue polypeptide: MALSLSLFLGGRVRTSLARCGFASQVMAGPGSVSCEPDPDSDWEPEERELQEVESALKRQKKAMRFQKIRRQMEAPGAPPRTLTWEAMEQIRYLHKEFAESWSVPRLAEGFDVSTDVIRRVLKSKFVPTLEQKLRQDQKVLKKAGFTREIGQLPVSEDTLKALSAGRSVSGLLMAGDEVSSKSQNHSTALKVAKSHPHSTDAQKKREGRDKRIQVLEESLVPATTALGHQRELQKSATSDSEATGRAGSDTLPSAVLLEELKPGEPGDQSFSSKVVQRGHDFFDSNGNFLYRI.

Positions 1–18 (MALSLSLFLGGRVRTSLA) are cleaved as a signal peptide. Phosphoserine is present on Ser-41. Disordered regions lie at residues 177–210 (DEVS…EGRD) and 224–254 (TTAL…TLPS). An N-linked (GlcNAc...) asparagine glycan is attached at Asn-185. Positions 198-210 (HSTDAQKKREGRD) are enriched in basic and acidic residues.

It belongs to the neugrin family. In terms of assembly, forms a regulatory protein-RNA complex, consisting of RCC1L, NGRN, RPUSD3, RPUSD4, TRUB2, FASTKD2 and 16S mt-rRNA. Interacts with 16S mt-rRNA; this interaction is direct. In terms of tissue distribution, expressed in heart, brain, liver and kidney. In brain, mainly expressed in neurons rather than glial cells.

The protein localises to the nucleus. It localises to the secreted. It is found in the mitochondrion membrane. Functionally, plays an essential role in mitochondrial ribosome biogenesis. As a component of a functional protein-RNA module, consisting of RCC1L, NGRN, RPUSD3, RPUSD4, TRUB2, FASTKD2 and 16S mitochondrial ribosomal RNA (16S mt-rRNA), controls 16S mt-rRNA abundance and is required for intra-mitochondrial translation of core subunits of the oxidative phosphorylation system. In Mus musculus (Mouse), this protein is Neugrin (Ngrn).